The chain runs to 379 residues: Acyl-CoA dehydrogenase, short-chain specific (379 aa).

The protein belongs to the acyl-CoA dehydrogenase family. FAD is required as a cofactor.

It catalyses the reaction butanoyl-CoA + oxidized [electron-transfer flavoprotein] + H(+) = (2E)-butenoyl-CoA + reduced [electron-transfer flavoprotein]. The catalysed reaction is a short-chain 2,3-saturated fatty acyl-CoA + oxidized [electron-transfer flavoprotein] + H(+) = a short-chain (2E)-enoyl-CoA + reduced [electron-transfer flavoprotein]. It participates in lipid metabolism; butanoate metabolism. This is Acyl-CoA dehydrogenase, short-chain specific (bcd) from Clostridium acetobutylicum (strain ATCC 824 / DSM 792 / JCM 1419 / IAM 19013 / LMG 5710 / NBRC 13948 / NRRL B-527 / VKM B-1787 / 2291 / W).